A 101-amino-acid chain; its full sequence is Small nuclear ribonucleoprotein Sm D3 (101 aa).

In terms of domain architecture, Sm spans 6–78; the sequence is IPVKLLNEAQ…IKFIVVPDLL (73 aa).

Belongs to the snRNP core protein family. In terms of assembly, component of the Sm core complex, present in spliceosomal snRNP U1, U2, U4/U6 and U5. The core complex contains SMB1, SMD1, SMD2, SMD3, SME1, SMX3 and SMX2 (Sm proteins B, D1, D2, D3, E, F and G, respectively), and is probably a heptameric ring structure. SMD3 specifically interacts with SMB1. Belongs to the CWC complex (or CEF1-associated complex), a spliceosome sub-complex reminiscent of a late-stage spliceosome composed of the U2, U5 and U6 snRNAs and at least BUD13, BUD31, BRR2, CDC40, CEF1, CLF1, CUS1, CWC2, CWC15, CWC21, CWC22, CWC23, CWC24, CWC25, CWC27, ECM2, HSH155, IST3, ISY1, LEA1, MSL1, NTC20, PRP8, PRP9, PRP11, PRP19, PRP21, PRP22, PRP45, PRP46, SLU7, SMB1, SMD1, SMD2, SMD3, SMX2, SMX3, SNT309, SNU114, SPP2, SYF1, SYF2, RSE1 and YJU2. Component of the U4/U6-U5 tri-snRNP complex composed of the U4, U6 and U5 snRNAs and at least PRP3, PRP4, PRP6, PRP8, PRP18, PRP31, PRP38, SNU13, SNU23, SNU66, SNU114, SPP381, SMB1, SMD1, SMD2, SMD3, SMX2, SMX3, LSM2, LSM3, LSM4, LSM5, LSM6, LSM7, LSM8, BRR2 and DIB1.

The protein resides in the cytoplasm. It localises to the cytosol. Its subcellular location is the nucleus. In terms of biological role, plays a role in pre-mRNA splicing as a core component of the spliceosomal U1, U2, U4 and U5 small nuclear ribonucleoproteins (snRNPs), the building blocks of the spliceosome. Also binds telomerase RNA and is required for its accumulation. In Saccharomyces cerevisiae (strain ATCC 204508 / S288c) (Baker's yeast), this protein is Small nuclear ribonucleoprotein Sm D3 (SMD3).